Consider the following 206-residue polypeptide: Small ribosomal subunit protein uS4A (206 aa).

The S4 RNA-binding domain maps to 98–164; it reads MRLDNVVYKL…EKFKTFAENP (67 aa).

Belongs to the universal ribosomal protein uS4 family. In terms of assembly, part of the 30S ribosomal subunit. Contacts protein S5. The interaction surface between S4 and S5 is involved in control of translational fidelity.

One of the primary rRNA binding proteins, it binds directly to 16S rRNA where it nucleates assembly of the body of the 30S subunit. Functionally, with S5 and S12 plays an important role in translational accuracy. This Clostridium novyi (strain NT) protein is Small ribosomal subunit protein uS4A.